The sequence spans 448 residues: Argininosuccinate synthase (448 aa).

ATP-binding positions include 17–25 (AFSGGLDTS) and Ala-43. An L-citrulline-binding site is contributed by Tyr-99. Residues Gly-129 and Thr-131 each contribute to the ATP site. Thr-131, Asn-135, and Asp-136 together coordinate L-aspartate. Asn-135 serves as a coordination point for L-citrulline. Asp-136 serves as a coordination point for ATP. L-citrulline is bound by residues Arg-139 and Ser-192. An ATP-binding site is contributed by Asp-194. L-citrulline-binding residues include Thr-201, Glu-203, and Glu-280.

Belongs to the argininosuccinate synthase family. Type 2 subfamily. Homotetramer.

Its subcellular location is the cytoplasm. It carries out the reaction L-citrulline + L-aspartate + ATP = 2-(N(omega)-L-arginino)succinate + AMP + diphosphate + H(+). It functions in the pathway amino-acid biosynthesis; L-arginine biosynthesis; L-arginine from L-ornithine and carbamoyl phosphate: step 2/3. In Pectobacterium atrosepticum (strain SCRI 1043 / ATCC BAA-672) (Erwinia carotovora subsp. atroseptica), this protein is Argininosuccinate synthase.